The primary structure comprises 137 residues: Large ribosomal subunit protein uL16 (137 aa).

This sequence belongs to the universal ribosomal protein uL16 family. In terms of assembly, part of the 50S ribosomal subunit.

Its function is as follows. Binds 23S rRNA and is also seen to make contacts with the A and possibly P site tRNAs. This Thioalkalivibrio sulfidiphilus (strain HL-EbGR7) protein is Large ribosomal subunit protein uL16.